Reading from the N-terminus, the 474-residue chain is Proline--tRNA ligase (474 aa).

The protein belongs to the class-II aminoacyl-tRNA synthetase family. ProS type 3 subfamily. As to quaternary structure, homodimer.

The protein resides in the cytoplasm. It carries out the reaction tRNA(Pro) + L-proline + ATP = L-prolyl-tRNA(Pro) + AMP + diphosphate. In terms of biological role, catalyzes the attachment of proline to tRNA(Pro) in a two-step reaction: proline is first activated by ATP to form Pro-AMP and then transferred to the acceptor end of tRNA(Pro). The chain is Proline--tRNA ligase from Phytoplasma australiense.